The primary structure comprises 353 residues: Photosystem II D2 protein (353 aa).

Threonine 2 carries the N-acetylthreonine modification. Threonine 2 carries the post-translational modification Phosphothreonine. A helical membrane pass occupies residues 41-61; the sequence is CAYFAVGGWFTGTTFVTSWYT. Histidine 118 contacts chlorophyll a. The chain crosses the membrane as a helical span at residues 125–141; the sequence is GFMLRQFELARSVQLRP. Positions 130 and 143 each coordinate pheophytin a. Residues 153–166 form a helical membrane-spanning segment; it reads VFVSVFLIYPLGQS. Histidine 198 provides a ligand contact to chlorophyll a. A helical transmembrane segment spans residues 208-228; sequence AALLCAIHGATVENTLFEDGD. Positions 215 and 262 each coordinate a plastoquinone. A Fe cation-binding site is contributed by histidine 215. Histidine 269 lines the Fe cation pocket. Residues 279–295 traverse the membrane as a helical segment; it reads GLWMSALGVVGLALNLR.

Belongs to the reaction center PufL/M/PsbA/D family. In terms of assembly, PSII is composed of 1 copy each of membrane proteins PsbA, PsbB, PsbC, PsbD, PsbE, PsbF, PsbH, PsbI, PsbJ, PsbK, PsbL, PsbM, PsbT, PsbX, PsbY, PsbZ, Psb30/Ycf12, at least 3 peripheral proteins of the oxygen-evolving complex and a large number of cofactors. It forms dimeric complexes. Requires The D1/D2 heterodimer binds P680, chlorophylls that are the primary electron donor of PSII, and subsequent electron acceptors. It shares a non-heme iron and each subunit binds pheophytin, quinone, additional chlorophylls, carotenoids and lipids. There is also a Cl(-1) ion associated with D1 and D2, which is required for oxygen evolution. The PSII complex binds additional chlorophylls, carotenoids and specific lipids. as cofactor.

It is found in the plastid. The protein localises to the chloroplast thylakoid membrane. It catalyses the reaction 2 a plastoquinone + 4 hnu + 2 H2O = 2 a plastoquinol + O2. Photosystem II (PSII) is a light-driven water:plastoquinone oxidoreductase that uses light energy to abstract electrons from H(2)O, generating O(2) and a proton gradient subsequently used for ATP formation. It consists of a core antenna complex that captures photons, and an electron transfer chain that converts photonic excitation into a charge separation. The D1/D2 (PsbA/PsbD) reaction center heterodimer binds P680, the primary electron donor of PSII as well as several subsequent electron acceptors. D2 is needed for assembly of a stable PSII complex. The polypeptide is Photosystem II D2 protein (Guizotia abyssinica (Niger)).